A 522-amino-acid chain; its full sequence is GMP synthase [glutamine-hydrolyzing] (522 aa).

Residues 5–204 enclose the Glutamine amidotransferase type-1 domain; it reads YILIIDFGSQ…VKNICNYTNV (200 aa). Cys82 acts as the Nucleophile in catalysis. Active-site residues include His178 and Glu180. The region spanning 205–397 is the GMPS ATP-PPase domain; the sequence is IKYSLSIRKI…IGIPKEIIFR (193 aa). 232-238 contacts ATP; sequence SGGIDSF.

In terms of assembly, homodimer.

It carries out the reaction XMP + L-glutamine + ATP + H2O = GMP + L-glutamate + AMP + diphosphate + 2 H(+). Its pathway is purine metabolism; GMP biosynthesis; GMP from XMP (L-Gln route): step 1/1. Its function is as follows. Catalyzes the synthesis of GMP from XMP. The chain is GMP synthase [glutamine-hydrolyzing] from Wigglesworthia glossinidia brevipalpis.